Reading from the N-terminus, the 77-residue chain is Translation initiation factor IF-1, chloroplastic (77 aa).

The S1-like domain maps to 1–71 (MKEQKLIHEG…TRGRIIYRLR (71 aa)).

The protein belongs to the IF-1 family. In terms of assembly, component of the 30S ribosomal translation pre-initiation complex which assembles on the 30S ribosome in the order IF-2 and IF-3, IF-1 and N-formylmethionyl-tRNA(fMet); mRNA recruitment can occur at any time during PIC assembly.

The protein localises to the plastid. The protein resides in the chloroplast. Functionally, one of the essential components for the initiation of protein synthesis. Stabilizes the binding of IF-2 and IF-3 on the 30S subunit to which N-formylmethionyl-tRNA(fMet) subsequently binds. Helps modulate mRNA selection, yielding the 30S pre-initiation complex (PIC). Upon addition of the 50S ribosomal subunit IF-1, IF-2 and IF-3 are released leaving the mature 70S translation initiation complex. In Liriodendron tulipifera (Tuliptree), this protein is Translation initiation factor IF-1, chloroplastic.